Reading from the N-terminus, the 198-residue chain is Transmembrane protein 17 (198 aa).

Asparagine 13 and asparagine 23 each carry an N-linked (GlcNAc...) asparagine glycan. Transmembrane regions (helical) follow at residues 45–65 (MSLYFNTYYFPLWWVSSIMML), 78–98 (FIVITVIILITLIEAIRLYLG), 110–130 (LAGFWLLSLLLQLPLILFLLF), and 142–162 (AIHIIFTLFLAFQVVAAFLTL).

It belongs to the TMEM17 family. As to quaternary structure, part of the tectonic-like complex (also named B9 complex).

It localises to the cell projection. It is found in the cilium membrane. Functionally, transmembrane component of the tectonic-like complex, a complex localized at the transition zone of primary cilia and acting as a barrier that prevents diffusion of transmembrane proteins between the cilia and plasma membranes. Required for ciliogenesis and sonic hedgehog/SHH signaling. This is Transmembrane protein 17 (TMEM17) from Homo sapiens (Human).